The following is a 312-amino-acid chain: Mas-related G-protein coupled receptor member B3 (312 aa).

Residues Met-1–Asn-31 are Extracellular-facing. The helical transmembrane segment at Leu-32–Leu-52 threads the bilayer. Topologically, residues Gly-53–Asn-67 are cytoplasmic. Residues Leu-68–Cys-88 traverse the membrane as a helical segment. The Extracellular segment spans residues Lys-89–Met-106. Residues Phe-107–Ile-127 form a helical membrane-spanning segment. At Met-128–His-140 the chain is on the cytoplasmic side. Residues Thr-141–Met-161 traverse the membrane as a helical segment. The Extracellular segment spans residues Glu-162–Asn-180. The helical transmembrane segment at Ile-181–Leu-201 threads the bilayer. Residues Leu-202 to Thr-220 lie on the Cytoplasmic side of the membrane. The chain crosses the membrane as a helical span at residues Ile-221–Val-241. The Extracellular portion of the chain corresponds to Asp-242–His-259. The chain crosses the membrane as a helical span at residues Ile-260–Ser-280. At Ile-281–Pro-312 the chain is on the cytoplasmic side.

This sequence belongs to the G-protein coupled receptor 1 family. Mas subfamily.

It localises to the membrane. In terms of biological role, orphan receptor. Probably involved in the function of nociceptive neurons. May regulate nociceptor function and/or development, including the sensation or modulation of pain. The sequence is that of Mas-related G-protein coupled receptor member B3 (Mrgprb3) from Mus musculus (Mouse).